Here is a 66-residue protein sequence, read N- to C-terminus: Beta-defensin 107A (66 aa).

Residues 1-22 (MKIFFFIFAALFLLAQIFQART) form the signal peptide. Disulfide bonds link C37/C51 and C41/C60.

This sequence belongs to the beta-defensin family.

The protein localises to the secreted. Its function is as follows. Has antibacterial activity. This chain is Beta-defensin 107A (DEFB107A), found in Gorilla gorilla gorilla (Western lowland gorilla).